The chain runs to 236 residues: Thiamine import ATP-binding protein ThiQ (236 aa).

An ABC transporter domain is found at 2–230 (LKLEKITYLY…SAAKASVLGI (229 aa)). An ATP-binding site is contributed by 32 to 39 (GPSGAGKS).

Belongs to the ABC transporter superfamily. Thiamine importer (TC 3.A.1.19.1) family. As to quaternary structure, the complex is composed of two ATP-binding proteins (ThiQ), two transmembrane proteins (ThiP) and a solute-binding protein (ThiB).

It localises to the cell inner membrane. The catalysed reaction is thiamine(out) + ATP + H2O = thiamine(in) + ADP + phosphate + H(+). Functionally, part of the ABC transporter complex ThiBPQ involved in thiamine import. Responsible for energy coupling to the transport system. The polypeptide is Thiamine import ATP-binding protein ThiQ (Yersinia pseudotuberculosis serotype I (strain IP32953)).